Consider the following 131-residue polypeptide: Large ribosomal subunit protein bL17 (131 aa).

This sequence belongs to the bacterial ribosomal protein bL17 family. In terms of assembly, part of the 50S ribosomal subunit. Contacts protein L32.

This chain is Large ribosomal subunit protein bL17, found in Bordetella parapertussis (strain 12822 / ATCC BAA-587 / NCTC 13253).